We begin with the raw amino-acid sequence, 176 residues long: Macro domain-containing protein lmo2759 (176 aa).

A Macro domain is found at 1-175; sequence MEITIVKGDI…LYNKLINSEV (175 aa).

The protein belongs to the MacroD-type family.

The polypeptide is Macro domain-containing protein lmo2759 (Listeria monocytogenes serovar 1/2a (strain ATCC BAA-679 / EGD-e)).